The following is a 310-amino-acid chain: Putative S-adenosyl-L-methionine-dependent methyltransferase MSMEG_1888/MSMEI_1848 (310 aa).

S-adenosyl-L-methionine contacts are provided by residues Asp128 and 157–158 (DL).

It belongs to the UPF0677 family.

Exhibits S-adenosyl-L-methionine-dependent methyltransferase activity. This is Putative S-adenosyl-L-methionine-dependent methyltransferase MSMEG_1888/MSMEI_1848 from Mycolicibacterium smegmatis (strain ATCC 700084 / mc(2)155) (Mycobacterium smegmatis).